Consider the following 50-residue polypeptide: MRVLLIIAGLALLSVVCYTSEMKEQNSLNEVLSAFFDVEEPQEKGCIICF.

A signal peptide spans methionine 1–threonine 19.

Belongs to the neurotoxin 10 (Hwtx-1) family. 67 (Jztx-67) subfamily. In terms of tissue distribution, expressed by the venom gland.

Its subcellular location is the secreted. In Chilobrachys guangxiensis (Chinese earth tiger tarantula), this protein is U37-theraphotoxin-Cg1a.